The sequence spans 429 residues: Violacein synthase (429 aa).

Residue 3–21 (RAIIVGGGLAGGLTAIYLA) participates in FAD binding.

Requires FAD as cofactor.

The catalysed reaction is protoviolaceinate + NADPH + O2 + H(+) = violaceinate + NADP(+) + H2O. It carries out the reaction protoviolaceinate + NADH + O2 + H(+) = violaceinate + NAD(+) + H2O. The enzyme catalyses protodeoxyviolaceinate + NADPH + O2 + H(+) = deoxyviolaceinate + NADP(+) + H2O. It catalyses the reaction protodeoxyviolaceinate + NADH + O2 + H(+) = deoxyviolaceinate + NAD(+) + H2O. The protein operates within pigment biosynthesis; violacein biosynthesis. In terms of biological role, catalyzes the hydroxylation of the 16-position of protoviolaceinate and protodeoxyviolaceinate to form violacein and deoxyviolacein, respectively. The protein is Violacein synthase (vioC) of Chromobacterium violaceum (strain ATCC 12472 / DSM 30191 / JCM 1249 / CCUG 213 / NBRC 12614 / NCIMB 9131 / NCTC 9757 / MK).